The following is a 387-amino-acid chain: Chaperone protein DnaJ (387 aa).

Residues Asp5 to Gly70 enclose the J domain. The CR-type zinc-finger motif lies at Gly144 to Asn226. Residues Cys157, Cys160, Cys174, Cys177, Cys200, Cys203, Cys214, and Cys217 each coordinate Zn(2+). CXXCXGXG motif repeat units lie at residues Cys157–Gly164, Cys174–Gly181, Cys200–Gly207, and Cys214–Gly221.

This sequence belongs to the DnaJ family. In terms of assembly, homodimer. The cofactor is Zn(2+).

The protein localises to the cytoplasm. In terms of biological role, participates actively in the response to hyperosmotic and heat shock by preventing the aggregation of stress-denatured proteins and by disaggregating proteins, also in an autonomous, DnaK-independent fashion. Unfolded proteins bind initially to DnaJ; upon interaction with the DnaJ-bound protein, DnaK hydrolyzes its bound ATP, resulting in the formation of a stable complex. GrpE releases ADP from DnaK; ATP binding to DnaK triggers the release of the substrate protein, thus completing the reaction cycle. Several rounds of ATP-dependent interactions between DnaJ, DnaK and GrpE are required for fully efficient folding. Also involved, together with DnaK and GrpE, in the DNA replication of plasmids through activation of initiation proteins. The polypeptide is Chaperone protein DnaJ (Clostridium perfringens (strain 13 / Type A)).